Here is a 524-residue protein sequence, read N- to C-terminus: Cytochrome P450 1A1 (524 aa).

Residues 33 to 44 are mitochondrial targeting signal; the sequence is WQPRLPKGLKSP. Ser71 carries an O-linked (GlcNAc) serine glycan. Phe228 serves as a coordination point for substrate. Residue Cys461 participates in heme binding.

Belongs to the cytochrome P450 family. In terms of assembly, interacts with cytosolic chaperones HSP70 and HSP90; this interaction is required for initial targeting to mitochondria. Interacts (via mitochondrial targeting signal) with TOMM40 (via N-terminus); this interaction is required for translocation across the mitochondrial outer membrane. It depends on heme as a cofactor.

It localises to the endoplasmic reticulum membrane. It is found in the mitochondrion inner membrane. The protein resides in the microsome membrane. Its subcellular location is the cytoplasm. It catalyses the reaction an organic molecule + reduced [NADPH--hemoprotein reductase] + O2 = an alcohol + oxidized [NADPH--hemoprotein reductase] + H2O + H(+). The catalysed reaction is estrone + reduced [NADPH--hemoprotein reductase] + O2 = 2-hydroxyestrone + oxidized [NADPH--hemoprotein reductase] + H2O + H(+). The enzyme catalyses estrone + reduced [NADPH--hemoprotein reductase] + O2 = 4-hydroxyestrone + oxidized [NADPH--hemoprotein reductase] + H2O + H(+). It carries out the reaction estrone + reduced [NADPH--hemoprotein reductase] + O2 = 6alpha-hydroxyestrone + oxidized [NADPH--hemoprotein reductase] + H2O + H(+). It catalyses the reaction estrone + reduced [NADPH--hemoprotein reductase] + O2 = 15alpha-hydroxyestrone + oxidized [NADPH--hemoprotein reductase] + H2O + H(+). The catalysed reaction is estrone + reduced [NADPH--hemoprotein reductase] + O2 = 16alpha-hydroxyestrone + oxidized [NADPH--hemoprotein reductase] + H2O + H(+). The enzyme catalyses 17beta-estradiol + reduced [NADPH--hemoprotein reductase] + O2 = 2-hydroxy-17beta-estradiol + oxidized [NADPH--hemoprotein reductase] + H2O + H(+). It carries out the reaction 17beta-estradiol + reduced [NADPH--hemoprotein reductase] + O2 = 4-hydroxy-17beta-estradiol + oxidized [NADPH--hemoprotein reductase] + H2O + H(+). It catalyses the reaction 17beta-estradiol + reduced [NADPH--hemoprotein reductase] + O2 = 6alpha-hydroxy-17beta-estradiol + oxidized [NADPH--hemoprotein reductase] + H2O + H(+). The catalysed reaction is 17beta-estradiol + reduced [NADPH--hemoprotein reductase] + O2 = 7alpha-hydroxy-17beta-estradiol + oxidized [NADPH--hemoprotein reductase] + H2O + H(+). The enzyme catalyses 17beta-estradiol + reduced [NADPH--hemoprotein reductase] + O2 = 15alpha-hydroxy-17beta-estradiol + oxidized [NADPH--hemoprotein reductase] + H2O + H(+). It carries out the reaction (5Z,8Z,11Z)-eicosatrienoate + reduced [NADPH--hemoprotein reductase] + O2 = 19-hydroxy-(5Z,8Z,11Z)-eicosatrienoate + oxidized [NADPH--hemoprotein reductase] + H2O + H(+). It catalyses the reaction (5Z,8Z,11Z,14Z)-eicosatetraenoate + reduced [NADPH--hemoprotein reductase] + O2 = 16-hydroxy-(5Z,8Z,11Z,14Z)-eicosatetraenoate + oxidized [NADPH--hemoprotein reductase] + H2O + H(+). The catalysed reaction is (5Z,8Z,11Z,14Z)-eicosatetraenoate + reduced [NADPH--hemoprotein reductase] + O2 = 17-hydroxy-(5Z,8Z,11Z,14Z)-eicosatetraenoate + oxidized [NADPH--hemoprotein reductase] + H2O + H(+). The enzyme catalyses (5Z,8Z,11Z,14Z)-eicosatetraenoate + reduced [NADPH--hemoprotein reductase] + O2 = 18-hydroxy-(5Z,8Z,11Z,14Z)-eicosatetraenoate + oxidized [NADPH--hemoprotein reductase] + H2O + H(+). It carries out the reaction (5Z,8Z,11Z,14Z)-eicosatetraenoate + reduced [NADPH--hemoprotein reductase] + O2 = 19-hydroxy-(5Z,8Z,11Z,14Z)-eicosatetraenoate + oxidized [NADPH--hemoprotein reductase] + H2O + H(+). It catalyses the reaction (5Z,8Z,11Z,14Z,17Z)-eicosapentaenoate + reduced [NADPH--hemoprotein reductase] + O2 = 19-hydroxy-(5Z,8Z,11Z,14Z,17Z)-eicosapentaenoate + oxidized [NADPH--hemoprotein reductase] + H2O + H(+). The catalysed reaction is (5Z,8Z,11Z,14Z)-eicosatetraenoate + reduced [NADPH--hemoprotein reductase] + O2 = (8R,9S)-epoxy-(5Z,11Z,14Z)-eicosatrienoate + oxidized [NADPH--hemoprotein reductase] + H2O + H(+). The enzyme catalyses (5Z,8Z,11Z,14Z)-eicosatetraenoate + reduced [NADPH--hemoprotein reductase] + O2 = (11R,12S)-epoxy-(5Z,8Z,14Z)-eicosatrienoate + oxidized [NADPH--hemoprotein reductase] + H2O + H(+). It carries out the reaction (5Z,8Z,11Z,14Z)-eicosatetraenoate + reduced [NADPH--hemoprotein reductase] + O2 = (14S,15R)-epoxy-(5Z,8Z,11Z)-eicosatrienoate + oxidized [NADPH--hemoprotein reductase] + H2O + H(+). It catalyses the reaction (5Z,8Z,11Z,14Z)-eicosatetraenoate + reduced [NADPH--hemoprotein reductase] + O2 = (14R,15S)-epoxy-(5Z,8Z,11Z)-eicosatrienoate + oxidized [NADPH--hemoprotein reductase] + H2O + H(+). The catalysed reaction is (5Z,8Z,11Z,14Z,17Z)-eicosapentaenoate + reduced [NADPH--hemoprotein reductase] + O2 = (17R,18S)-epoxy-(5Z,8Z,11Z,14Z)-eicosatetraenoate + oxidized [NADPH--hemoprotein reductase] + H2O + H(+). The enzyme catalyses (4Z,7Z,10Z,13Z,16Z,19Z)-docosahexaenoate + reduced [NADPH--hemoprotein reductase] + O2 = (19S,20R)-epoxy-(4Z,7Z,10Z,13Z,16Z)-docosapentaenoate + oxidized [NADPH--hemoprotein reductase] + H2O + H(+). It carries out the reaction (4Z,7Z,10Z,13Z,16Z,19Z)-docosahexaenoate + reduced [NADPH--hemoprotein reductase] + O2 = (19R,20S)-epoxy-(4Z,7Z,10Z,13Z,16Z)-docosapentaenoate + oxidized [NADPH--hemoprotein reductase] + H2O + H(+). It catalyses the reaction all-trans-retinol + reduced [NADPH--hemoprotein reductase] + O2 = all-trans-retinal + oxidized [NADPH--hemoprotein reductase] + 2 H2O + H(+). The catalysed reaction is all-trans-retinal + reduced [NADPH--hemoprotein reductase] + O2 = all-trans-retinoate + oxidized [NADPH--hemoprotein reductase] + H2O + 2 H(+). The enzyme catalyses (13S)-hydroperoxy-(9Z,11E)-octadecadienoate = 13-oxo-(9Z,11E)-octadecadienoate + H2O. It carries out the reaction (12S)-hydroperoxy-(5Z,8Z,10E,14Z)-eicosatetraenoate = 12-oxo-(5Z,8Z,10E,14Z)-eicosatetraenoate + H2O. It catalyses the reaction (15S)-hydroperoxy-(5Z,8Z,11Z,13E)-eicosatetraenoate = 15-oxo-(5Z,8Z,11Z,13E)-eicosatetraenoate + H2O. The catalysed reaction is (5S)-hydroperoxy-(6E,8Z,11Z,14Z)-eicosatetraenoate = 5-oxo-(6E,8Z,11Z,14Z)-eicosatetraenoate + H2O. The protein operates within steroid hormone biosynthesis. It participates in lipid metabolism; fatty acid metabolism. It functions in the pathway cofactor metabolism; retinol metabolism. In terms of biological role, a cytochrome P450 monooxygenase involved in the metabolism of various endogenous substrates, including fatty acids, steroid hormones and vitamins. Mechanistically, uses molecular oxygen inserting one oxygen atom into a substrate, and reducing the second into a water molecule, with two electrons provided by NADPH via cytochrome P450 reductase (CPR; NADPH-ferrihemoprotein reductase). Catalyzes the hydroxylation of carbon-hydrogen bonds. Exhibits high catalytic activity for the formation of hydroxyestrogens from estrone (E1) and 17beta-estradiol (E2), namely 2-hydroxy E1 and E2, as well as D-ring hydroxylated E1 and E2 at the C15alpha and C16alpha positions. Displays different regioselectivities for polyunsaturated fatty acids (PUFA) hydroxylation. Catalyzes the epoxidation of double bonds of certain PUFA. Converts arachidonic acid toward epoxyeicosatrienoic acid (EET) regioisomers, 8,9-, 11,12-, and 14,15-EET, that function as lipid mediators in the vascular system. Displays an absolute stereoselectivity in the epoxidation of eicosapentaenoic acid (EPA) producing the 17(R),18(S) enantiomer. May play an important role in all-trans retinoic acid biosynthesis in extrahepatic tissues. Catalyzes two successive oxidative transformation of all-trans retinol to all-trans retinal and then to the active form all-trans retinoic acid. May also participate in eicosanoids metabolism by converting hydroperoxide species into oxo metabolites (lipoxygenase-like reaction, NADPH-independent). In Canis lupus familiaris (Dog), this protein is Cytochrome P450 1A1 (CYP1A1).